Consider the following 116-residue polypeptide: NADH dehydrogenase [ubiquinone] 1 alpha subcomplex subunit 5 (116 aa).

Alanine 2 bears the N-acetylalanine mark. 4 positions are modified to N6-acetyllysine: lysine 30, lysine 36, lysine 46, and lysine 60. Residue serine 89 is modified to Phosphoserine. Lysine 98 is modified (N6-acetyllysine; alternate). Lysine 98 is subject to N6-succinyllysine; alternate.

It belongs to the complex I NDUFA5 subunit family. Complex I is composed of 45 different subunits. Acetylation of Lys-98 is observed in liver mitochondria from fasted mice but not from fed mice.

It is found in the mitochondrion inner membrane. Functionally, accessory subunit of the mitochondrial membrane respiratory chain NADH dehydrogenase (Complex I), that is believed not to be involved in catalysis. Complex I functions in the transfer of electrons from NADH to the respiratory chain. The immediate electron acceptor for the enzyme is believed to be ubiquinone. The protein is NADH dehydrogenase [ubiquinone] 1 alpha subcomplex subunit 5 (Ndufa5) of Mus musculus (Mouse).